The following is a 196-amino-acid chain: 3-dehydroquinate dehydratase (196 aa).

3-dehydroquinate contacts are provided by residues 23-25 (ELR) and Arg45. Residue His98 is the Proton donor/acceptor of the active site. Residue Lys122 is the Schiff-base intermediate with substrate of the active site. 3-dehydroquinate is bound by residues Arg159 and Gln182.

The protein belongs to the type-I 3-dehydroquinase family. As to quaternary structure, homodimer.

It carries out the reaction 3-dehydroquinate = 3-dehydroshikimate + H2O. It functions in the pathway metabolic intermediate biosynthesis; chorismate biosynthesis; chorismate from D-erythrose 4-phosphate and phosphoenolpyruvate: step 3/7. Involved in the third step of the chorismate pathway, which leads to the biosynthesis of aromatic amino acids. Catalyzes the cis-dehydration of 3-dehydroquinate (DHQ) and introduces the first double bond of the aromatic ring to yield 3-dehydroshikimate. The chain is 3-dehydroquinate dehydratase from Archaeoglobus fulgidus (strain ATCC 49558 / DSM 4304 / JCM 9628 / NBRC 100126 / VC-16).